A 565-amino-acid chain; its full sequence is 2-(3-amino-3-carboxypropyl)histidine synthase subunit 2 (565 aa).

[4Fe-4S] cluster contacts are provided by cysteine 139, cysteine 160, and cysteine 377. Disordered regions lie at residues 424–458 (QPAE…DLRT) and 464–483 (HTRP…DDAV).

The protein belongs to the DPH1/DPH2 family. DPH2 subfamily. In terms of assembly, component of the 2-(3-amino-3-carboxypropyl)histidine synthase complex composed of dph1, dph2, dph3 and a NADH-dependent reductase, predominantly cbr1. The cofactor is [4Fe-4S] cluster.

The protein localises to the cytoplasm. The protein operates within protein modification; peptidyl-diphthamide biosynthesis. Functionally, required for the first step of diphthamide biosynthesis, a post-translational modification of histidine which occurs in elongation factor 2. Dph1 and dph2 transfer a 3-amino-3-carboxypropyl (ACP) group from S-adenosyl-L-methionine (SAM) to a histidine residue, the reaction is assisted by a reduction system comprising dph3 and a NADH-dependent reductase, predominantly cbr1. Facilitates the reduction of the catalytic iron-sulfur cluster found in the dph1 subunit. The polypeptide is 2-(3-amino-3-carboxypropyl)histidine synthase subunit 2 (dph2) (Aspergillus fumigatus (strain ATCC MYA-4609 / CBS 101355 / FGSC A1100 / Af293) (Neosartorya fumigata)).